A 770-amino-acid polypeptide reads, in one-letter code: Glutamate carboxypeptidase 2 homolog (770 aa).

Residues 1-19 are Cytoplasmic-facing; the sequence is MPYVGVGAQKASTNLTGGP. Residues 20-40 form a helical; Signal-anchor for type II membrane protein membrane-spanning segment; the sequence is MMKAYAFVLAFFLLGLGVLAL. Over 41–770 the chain is Extracellular; it reads GKHHSGRRFN…CVVNTLRDVI (730 aa). 2 N-linked (GlcNAc...) asparagine glycosylation sites follow: asparagine 175 and asparagine 337. A catalytic region spans residues 282–597; the sequence is SKKELFKGRT…QYWAELAKTF (316 aa). Zn(2+) is bound by residues histidine 387 and aspartate 397. Asparagine 417 carries N-linked (GlcNAc...) asparagine glycosylation. The active-site Nucleophile is glutamate 435. 2 residues coordinate Zn(2+): glutamate 436 and aspartate 464. Asparagine 469 and asparagine 551 each carry an N-linked (GlcNAc...) asparagine glycan. Position 562 (histidine 562) interacts with Zn(2+). N-linked (GlcNAc...) asparagine glycosylation is found at asparagine 606 and asparagine 630.

The protein belongs to the peptidase M28 family. M28B subfamily. Zn(2+) serves as cofactor.

It localises to the membrane. It carries out the reaction Release of an unsubstituted, C-terminal glutamyl residue, typically from Ac-Asp-Glu or folylpoly-gamma-glutamates.. This Caenorhabditis briggsae protein is Glutamate carboxypeptidase 2 homolog.